A 349-amino-acid polypeptide reads, in one-letter code: Biotin synthase (349 aa).

A compositionally biased stretch (basic and acidic residues) spans 1-11; the sequence is MLEGIEREAAE. Positions 1–30 are disordered; that stretch reads MLEGIEREAAEHSNGCSGPAGHAPPAGAPR. In terms of domain architecture, Radical SAM core spans 64–283; the sequence is HEVQLCTLLS…IAVARVMMPR (220 aa). [4Fe-4S] cluster-binding residues include C79, C83, and C86. C123, C155, C215, and R287 together coordinate [2Fe-2S] cluster.

Belongs to the radical SAM superfamily. Biotin synthase family. Homodimer. [4Fe-4S] cluster serves as cofactor. Requires [2Fe-2S] cluster as cofactor.

The enzyme catalyses (4R,5S)-dethiobiotin + (sulfur carrier)-SH + 2 reduced [2Fe-2S]-[ferredoxin] + 2 S-adenosyl-L-methionine = (sulfur carrier)-H + biotin + 2 5'-deoxyadenosine + 2 L-methionine + 2 oxidized [2Fe-2S]-[ferredoxin]. The protein operates within cofactor biosynthesis; biotin biosynthesis; biotin from 7,8-diaminononanoate: step 2/2. Catalyzes the conversion of dethiobiotin (DTB) to biotin by the insertion of a sulfur atom into dethiobiotin via a radical-based mechanism. The chain is Biotin synthase from Sorangium cellulosum (strain So ce56) (Polyangium cellulosum (strain So ce56)).